A 540-amino-acid chain; its full sequence is SNW/SKI-interacting protein B (540 aa).

Disordered regions lie at residues 1 to 106 (MVLR…SLTV), 215 to 273 (GETQ…NPKG), 351 to 402 (GAAP…RDRD), and 502 to 526 (ASVAAGKRERPVEFDGPEMEEDPFH). Basic and acidic residues-rich tracts occupy residues 16–29 (PHDHTEDEWFKERY) and 83–94 (MGRRGGDGDGEQ). Residues 189-353 (PEFIKYTPAR…KARAEMLGAA (165 aa)) form an SNW region. A compositionally biased stretch (pro residues) spans 236 to 251 (AGSPPVPVLRSPPRPP). Over residues 359 to 382 (ERSKAAAERDAIREERRRERRLEA) the composition is skewed to basic and acidic residues. The span at 383–393 (RAAAAAASKKS) shows a compositional bias: low complexity.

It belongs to the SNW family.

The protein localises to the nucleus. This is SNW/SKI-interacting protein B from Oryza sativa subsp. japonica (Rice).